The primary structure comprises 343 residues: Adenosine kinase (343 aa).

Aspartate 296 is a catalytic residue.

Belongs to the carbohydrate kinase PfkB family. Mg(2+) serves as cofactor.

The enzyme catalyses adenosine + ATP = AMP + ADP + H(+). Its pathway is purine metabolism; AMP biosynthesis via salvage pathway; AMP from adenosine: step 1/1. Functionally, ATP dependent phosphorylation of adenosine and other related nucleoside analogs to monophosphate derivatives. Can also act on the cytokinin isopentenyladenosine to produce isopentenyladenosine monophosphate. This is Adenosine kinase (ADK) from Physcomitrium patens (Spreading-leaved earth moss).